The following is a 218-amino-acid chain: Ropporin-1-like protein (218 aa).

The RIIa domain occupies 17 to 54 (PALPNMLKQFTKAAIRTQPRDVLQWAADYFSALSKGQD). Positions 199–218 (QSQGGMVQPSNFTSLHTAEK) are disordered.

This sequence belongs to the ropporin family. As to quaternary structure, component of axonemal radial spoke complexes.

Its subcellular location is the cell projection. The protein resides in the cilium. It localises to the flagellum. Functionally, functions as part of axonemal radial spoke complexes that play an important part in the motility of sperm and cilia. Important for male fertility. Involved in fibrous sheath integrity and sperm motility, plays a role in PKA-dependent signaling processes required for spermatozoa capacitation. The chain is Ropporin-1-like protein (ropn1l) from Danio rerio (Zebrafish).